Consider the following 1077-residue polypeptide: Semaphorin-5A (1077 aa).

Residues 1-21 (MKGACILAWLFSSLGVWRLAR) form the signal peptide. Residues 22 to 971 (PETQDPAKCQ…RCGEFNMFHM (950 aa)) are Extracellular-facing. Residues 35 to 484 (HPVVSYKEIG…LQEHVAKIPL (450 aa)) enclose the Sema domain. 2 disulfide bridges follow: cysteine 104–cysteine 114 and cysteine 131–cysteine 140. N-linked (GlcNAc...) asparagine glycosylation is found at asparagine 147, asparagine 168, asparagine 227, and asparagine 277. Intrachain disulfides connect cysteine 254–cysteine 357 and cysteine 278–cysteine 320. N-linked (GlcNAc...) asparagine glycosylation is found at asparagine 323 and asparagine 367. 2 cysteine pairs are disulfide-bonded: cysteine 487–cysteine 504 and cysteine 496–cysteine 513. N-linked (GlcNAc...) asparagine glycans are attached at residues asparagine 536 and asparagine 591. TSP type-1 domains follow at residues 540 to 593 (DGSF…TNCS), 595 to 651 (NGGW…LLCP), 653 to 702 (HVFW…NACP), 707 to 765 (TTPW…GCST), 784 to 839 (NGAW…LPCP), 841 to 896 (DGVW…QTCP), and 897 to 944 (ESWS…VFDS). 6 disulfide bridges follow: cysteine 607–cysteine 644, cysteine 611–cysteine 650, cysteine 622–cysteine 634, cysteine 665–cysteine 696, cysteine 669–cysteine 701, and cysteine 680–cysteine 686. Residue asparagine 717 is glycosylated (N-linked (GlcNAc...) asparagine). 6 disulfides stabilise this stretch: cysteine 796-cysteine 833, cysteine 800-cysteine 838, cysteine 811-cysteine 823, cysteine 853-cysteine 890, cysteine 857-cysteine 895, and cysteine 868-cysteine 880. Residue asparagine 933 is glycosylated (N-linked (GlcNAc...) asparagine). The chain crosses the membrane as a helical span at residues 972-992 (FHMMAVGLSSSILGCLLTLLV). The Cytoplasmic portion of the chain corresponds to 993-1077 (YTYCQRYQQQ…FTDLNNYDEY (85 aa)).

The protein belongs to the semaphorin family. In terms of assembly, binds PLXNB3. As to expression, in adult, detected in liver, brain, kidney, heart, lung and spleen.

The protein resides in the membrane. Its function is as follows. Bifunctional axonal guidance cue regulated by sulfated proteoglycans; attractive effects result from interactions with heparan sulfate proteoglycans (HSPGs), while the inhibitory effects depend on interactions with chondroitin sulfate proteoglycans (CSPGs). Ligand for receptor PLXNB3. In glioma cells, SEMA5A stimulation of PLXNB3 results in the disassembly of F-actin stress fibers, disruption of focal adhesions and cellular collapse as well as inhibition of cell migration and invasion through ARHGDIA-mediated inactivation of RAC1. May promote angiogenesis by increasing endothelial cell proliferation and migration and inhibiting apoptosis. This Mus musculus (Mouse) protein is Semaphorin-5A (Sema5a).